The sequence spans 443 residues: Thymidine phosphorylase (443 aa).

It belongs to the thymidine/pyrimidine-nucleoside phosphorylase family. As to quaternary structure, homodimer.

The catalysed reaction is thymidine + phosphate = 2-deoxy-alpha-D-ribose 1-phosphate + thymine. Its pathway is pyrimidine metabolism; dTMP biosynthesis via salvage pathway; dTMP from thymine: step 1/2. The enzymes which catalyze the reversible phosphorolysis of pyrimidine nucleosides are involved in the degradation of these compounds and in their utilization as carbon and energy sources, or in the rescue of pyrimidine bases for nucleotide synthesis. The chain is Thymidine phosphorylase from Photobacterium profundum (strain SS9).